The sequence spans 186 residues: MSGAHRLIILVAGMPGSGKSVLSSIARSMGIPVYVMGDIVREEARRRGIEPTPENLNRLARLLREEHGSTVVAERTASKIASDDHSIVLVDGVRSLDEVAVFEKLGKTVIVAVHASPRTRFERIRRRGRPGDPTTWEEFRQRDLTELGFGLGNVIALADYMLVNELSLEEFEAEAKRLLSRLTGQG.

13–20 (GMPGSGKS) lines the ATP pocket.

The protein belongs to the UPF0200 family.

The sequence is that of UPF0200 protein Hbut_0338 from Hyperthermus butylicus (strain DSM 5456 / JCM 9403 / PLM1-5).